The chain runs to 356 residues: Myricetin 7/4'-O-methyltransferase 2 (356 aa).

Aspartate 222 lines the S-adenosyl-L-methionine pocket. The active-site Proton acceptor is histidine 260.

It belongs to the class I-like SAM-binding methyltransferase superfamily. Cation-independent O-methyltransferase family. Homodimer.

The catalysed reaction is quercetin + S-adenosyl-L-methionine = rhamnetin + S-adenosyl-L-homocysteine + H(+). It catalyses the reaction kaempferol + S-adenosyl-L-methionine = kaempferide + S-adenosyl-L-homocysteine + H(+). It carries out the reaction myricetin + S-adenosyl-L-methionine = 7-O-methylmyricetin + S-adenosyl-L-homocysteine + H(+). The enzyme catalyses kaempferide + S-adenosyl-L-methionine = 7,4'-O-dimethylkaempferol + S-adenosyl-L-homocysteine + H(+). The catalysed reaction is isorhamnetin + S-adenosyl-L-methionine = 3',4'-O-dimethylquercetin + S-adenosyl-L-homocysteine + 2 H(+). It catalyses the reaction 3',4',5,7-tetrahydroxy-3-methoxyflavone + S-adenosyl-L-methionine = 3',4',5-trihydroxy-3,7-dimethoxyflavone + S-adenosyl-L-homocysteine + H(+). It carries out the reaction rhamnetin + S-adenosyl-L-methionine = 7,4'-O-dimethylquercetin + S-adenosyl-L-homocysteine + H(+). The enzyme catalyses syringetin + S-adenosyl-L-methionine = 7,3',5'-O-trimethylmyricetin + S-adenosyl-L-homocysteine + H(+). The catalysed reaction is 3',4',5'-O-trimethylmyricetin + S-adenosyl-L-methionine = 7,3',4',5'-O-tetramethylmyricetin + S-adenosyl-L-homocysteine. It participates in flavonoid metabolism. Functionally, flavonoid 7/4'-O-methyltransferase involved in the biosynthesis of polymethoxylated flavonoids natural products such as myricetin derivatives, aroma compounds possessing antioxidant properties and exhibiting pharmacological activities such as anti-carcinogen, anti-viral, anti-thrombotic, anti-diabetic, anti-atherosclerotic, and anti-inflammatory effects. Catalyzes S-adenosylmethionine-dependent regioselective 7/4'-O-methylation of flavonoids; active on various hydroxylated flavonoid substrates. This chain is Myricetin 7/4'-O-methyltransferase 2, found in Solanum lycopersicum (Tomato).